The sequence spans 447 residues: Sulfoquinovose isomerase (447 aa).

Belongs to the SqvD family.

It catalyses the reaction 6-sulfo-beta-D-quinovose = 6-deoxy-6-sulfo-D-fructose. Its function is as follows. Part of the sulfo-TK pathway, a D-sulfoquinovose degradation pathway that produces 2-hydroxyethane-1-sulfonate (isethionate). Catalyzes the isomerization of sulfoquinovose (SQ) to 6-deoxy-6-sulfo-D-fructose (SF). The protein is Sulfoquinovose isomerase of Clostridium sp. (strain MSTE9).